A 217-amino-acid polypeptide reads, in one-letter code: Trimethylamine corrinoid protein (217 aa).

In terms of domain architecture, B12-binding N-terminal spans 1–92 (MANKEEIIAK…EMEKRKSQTK (92 aa)). The 124-residue stretch at 94-217 (LGTVAIGTIE…VAKVKAALNV (124 aa)) folds into the B12-binding domain. Position 107 (His107) interacts with methylcob(III)alamin.

It belongs to the methylamine corrinoid protein family. As to quaternary structure, can form a complex with MttB.

The protein operates within one-carbon metabolism; methanogenesis from trimethylamine. In terms of biological role, acts probably as a methyl group carrier between MttB and either MtbA or MtaA. The sequence is that of Trimethylamine corrinoid protein from Methanosarcina barkeri.